Here is a 125-residue protein sequence, read N- to C-terminus: Ribosome-binding factor A (125 aa).

The protein belongs to the RbfA family. As to quaternary structure, monomer. Binds 30S ribosomal subunits, but not 50S ribosomal subunits or 70S ribosomes.

Its subcellular location is the cytoplasm. One of several proteins that assist in the late maturation steps of the functional core of the 30S ribosomal subunit. Associates with free 30S ribosomal subunits (but not with 30S subunits that are part of 70S ribosomes or polysomes). Required for efficient processing of 16S rRNA. May interact with the 5'-terminal helix region of 16S rRNA. This chain is Ribosome-binding factor A, found in Methylobacillus flagellatus (strain ATCC 51484 / DSM 6875 / VKM B-1610 / KT).